Here is a 253-residue protein sequence, read N- to C-terminus: MCALVPSFFTNFGWPSTNQYESYYGAGDNLNNGTFLELTVPQTYEVTHHQNSLGVSVSSEGNEIDNNPVVVKKLNHNASERDRRKKINTLFSSLRSCLPASDQSKKLSIPETVSKSLKYIPELQQQVKRLIQKKEEILVRVSGQRDFELYDKQQPKAVASYLSTVSATRLGDNEVMVQVSSSKIHNFSISNVLGGIEEDGFVLVDVSSSRSQGERLFYTLHLQVENMDDYKINCEELSERMLYLYEKCENSFN.

Residues 71 to 123 (VKKLNHNASERDRRKKINTLFSSLRSCLPASDQSKKLSIPETVSKSLKYIPEL) form the bHLH domain.

In terms of assembly, homodimer. In terms of tissue distribution, roots.

It localises to the nucleus. The polypeptide is Transcription factor ORG2 (ORG2) (Arabidopsis thaliana (Mouse-ear cress)).